We begin with the raw amino-acid sequence, 210 residues long: Glycerol-3-phosphate acyltransferase 2 (210 aa).

The next 6 membrane-spanning stretches (helical) occupy residues 4–24 (LIMV…PAPY), 54–74 (FWPG…AMAV), 82–102 (LGIQ…PVWL), 114–134 (IGIL…CFLV), 141–161 (FPTL…WLGQ), and 163–183 (DLGK…MYIP).

The protein belongs to the PlsY family. As to quaternary structure, probably interacts with PlsX.

The protein localises to the cell membrane. It catalyses the reaction an acyl phosphate + sn-glycerol 3-phosphate = a 1-acyl-sn-glycero-3-phosphate + phosphate. The protein operates within lipid metabolism; phospholipid metabolism. Its function is as follows. Catalyzes the transfer of an acyl group from acyl-phosphate (acyl-PO(4)) to glycerol-3-phosphate (G3P) to form lysophosphatidic acid (LPA). This enzyme utilizes acyl-phosphate as fatty acyl donor, but not acyl-CoA or acyl-ACP. The polypeptide is Glycerol-3-phosphate acyltransferase 2 (Dehalococcoides mccartyi (strain ATCC BAA-2266 / KCTC 15142 / 195) (Dehalococcoides ethenogenes (strain 195))).